Reading from the N-terminus, the 438-residue chain is Xylose isomerase (438 aa).

Catalysis depends on residues His100 and Asp103. Mg(2+)-binding residues include Glu231, Glu267, His270, Asp295, Asp306, Asp308, and Asp338.

The protein belongs to the xylose isomerase family. In terms of assembly, homotetramer. It depends on Mg(2+) as a cofactor.

It is found in the cytoplasm. It carries out the reaction alpha-D-xylose = alpha-D-xylulofuranose. The polypeptide is Xylose isomerase (Thermoanaerobacter sp. (strain X514)).